The following is a 235-amino-acid chain: Glutathione S-transferase L3 (235 aa).

Positions 27–108 (GTTRLYTSYV…YLDNTFEGPS (82 aa)) constitute a GST N-terminal domain. Glutathione contacts are provided by residues 37–38 (CP), 65–66 (NR), 79–80 (KV), and 92–93 (ES). The 145-residue stretch at 86–230 (NGKIIGESLD…MDPKEIVEVF (145 aa)) folds into the GST C-terminal domain.

The protein belongs to the GST superfamily. Lambda family.

It localises to the cytoplasm. The protein resides in the cytosol. It catalyses the reaction RX + glutathione = an S-substituted glutathione + a halide anion + H(+). In terms of biological role, catalyzes the glutathione-dependent reduction of S-glutathionylquercetin to quercetin. The sequence is that of Glutathione S-transferase L3 (GSTL3) from Arabidopsis thaliana (Mouse-ear cress).